The sequence spans 293 residues: ATP synthase gamma chain (293 aa).

Belongs to the ATPase gamma chain family. F-type ATPases have 2 components, CF(1) - the catalytic core - and CF(0) - the membrane proton channel. CF(1) has five subunits: alpha(3), beta(3), gamma(1), delta(1), epsilon(1). CF(0) has three main subunits: a, b and c.

It is found in the cell inner membrane. Functionally, produces ATP from ADP in the presence of a proton gradient across the membrane. The gamma chain is believed to be important in regulating ATPase activity and the flow of protons through the CF(0) complex. In Gluconacetobacter diazotrophicus (strain ATCC 49037 / DSM 5601 / CCUG 37298 / CIP 103539 / LMG 7603 / PAl5), this protein is ATP synthase gamma chain.